Here is a 330-residue protein sequence, read N- to C-terminus: Polyprenal reductase (330 aa).

The Cytoplasmic portion of the chain corresponds to Met1–Arg16. Residues Ala17–Ala37 traverse the membrane as a helical segment. At Arg38–Ser89 the chain is on the lumenal side. A helical membrane pass occupies residues Leu90–Ala110. The Cytoplasmic portion of the chain corresponds to Leu111–Lys136. A helical transmembrane segment spans residues Leu137 to Phe157. The Lumenal segment spans residues Glu158–Ala169. A helical transmembrane segment spans residues Ile170 to Leu190. Residues Ser191–Asn206 are Cytoplasmic-facing. Residues Leu207–Ala227 traverse the membrane as a helical segment. At His228–Ser277 the chain is on the lumenal side. Residues Met278–Phe298 form a helical membrane-spanning segment. The Cytoplasmic portion of the chain corresponds to Ser299–Phe330.

It belongs to the steroid 5-alpha reductase family. Polyprenal reductase subfamily. Expressed in the 2 tissues tested i.e. testis and liver.

The protein localises to the endoplasmic reticulum membrane. It carries out the reaction a di-trans,poly-cis-dolichal + NADP(+) = a di-trans,poly-cis-polyprenal + NADPH + H(+). The enzyme catalyses a 3-oxo-5alpha-steroid + NADP(+) = a 3-oxo-Delta(4)-steroid + NADPH + H(+). The catalysed reaction is androst-4-ene-3,17-dione + NADPH + H(+) = 5alpha-androstan-3,17-dione + NADP(+). It catalyses the reaction 17beta-hydroxy-5alpha-androstan-3-one + NADP(+) = testosterone + NADPH + H(+). It functions in the pathway protein modification; protein glycosylation. Its function is as follows. Plays a key role in early steps of protein N-linked glycosylation by being involved in the conversion of polyprenol into dolichol. Acts as a polyprenal reductase that mediates the reduction of polyprenal into dolichal in a NADP-dependent mechanism. Dolichols are required for the synthesis of dolichol-linked monosaccharides and the oligosaccharide precursor used for N-glycosylation. Also able to convert testosterone (T) into 5-alpha-dihydrotestosterone (DHT). The chain is Polyprenal reductase from Rattus norvegicus (Rat).